The following is a 334-amino-acid chain: Phosphate acyltransferase (334 aa).

Belongs to the PlsX family. Homodimer. Probably interacts with PlsY.

It localises to the cytoplasm. It carries out the reaction a fatty acyl-[ACP] + phosphate = an acyl phosphate + holo-[ACP]. It functions in the pathway lipid metabolism; phospholipid metabolism. Catalyzes the reversible formation of acyl-phosphate (acyl-PO(4)) from acyl-[acyl-carrier-protein] (acyl-ACP). This enzyme utilizes acyl-ACP as fatty acyl donor, but not acyl-CoA. This chain is Phosphate acyltransferase, found in Desulfitobacterium hafniense (strain DSM 10664 / DCB-2).